The chain runs to 177 residues: O-acetyl-ADP-ribose deacetylase (177 aa).

Residues 1–175 (MNSRIHVIHG…LYQRLLTQQG (175 aa)) form the Macro domain. Substrate is bound by residues 11-12 (DI), asparagine 25, 33-35 (GVD), and 122-126 (STGVY). The active-site Proton acceptor is the aspartate 35.

It belongs to the MacroD-type family. YmdB subfamily. In terms of assembly, homodimer. Interacts with RNase III.

The catalysed reaction is 3''-O-acetyl-ADP-D-ribose + H2O = ADP-D-ribose + acetate + H(+). The enzyme catalyses 2''-O-acetyl-ADP-D-ribose + H2O = ADP-D-ribose + acetate + H(+). Deacetylates O-acetyl-ADP ribose to yield ADP-ribose and free acetate. Down-regulates ribonuclease 3 (RNase III) activity. Acts by interacting directly with the region of the ribonuclease that is required for dimerization/activation. In Citrobacter rodentium (strain ICC168) (Citrobacter freundii biotype 4280), this protein is O-acetyl-ADP-ribose deacetylase.